A 166-amino-acid polypeptide reads, in one-letter code: Large ribosomal subunit protein uL10 (166 aa).

The protein belongs to the universal ribosomal protein uL10 family. Part of the ribosomal stalk of the 50S ribosomal subunit. The N-terminus interacts with L11 and the large rRNA to form the base of the stalk. The C-terminus forms an elongated spine to which L12 dimers bind in a sequential fashion forming a multimeric L10(L12)X complex.

In terms of biological role, forms part of the ribosomal stalk, playing a central role in the interaction of the ribosome with GTP-bound translation factors. This Tropheryma whipplei (strain TW08/27) (Whipple's bacillus) protein is Large ribosomal subunit protein uL10.